Consider the following 103-residue polypeptide: N(4)-acetylcytidine amidohydrolase (103 aa).

One can recognise an ASCH domain in the interval 7–93 (TFFERFEQDI…VIAEIYPGLE (87 aa)). K21 functions as the Proton acceptor in the catalytic mechanism. The active-site Nucleophile is T24. The active-site Proton donor is the E74.

The protein belongs to the N(4)-acetylcytidine amidohydrolase family.

The catalysed reaction is N(4)-acetylcytidine + H2O = cytidine + acetate + H(+). It catalyses the reaction N(4)-acetyl-2'-deoxycytidine + H2O = 2'-deoxycytidine + acetate + H(+). The enzyme catalyses N(4)-acetylcytosine + H2O = cytosine + acetate + H(+). Its function is as follows. Catalyzes the hydrolysis of N(4)-acetylcytidine (ac4C). The polypeptide is N(4)-acetylcytidine amidohydrolase (Shewanella putrefaciens (strain CN-32 / ATCC BAA-453)).